A 399-amino-acid polypeptide reads, in one-letter code: Phosphoglycerate kinase (399 aa).

Residues 22–24 (DLN), Arg37, 60–63 (HFGR), Arg119, and Arg152 each bind substrate. Residues Lys202, Glu324, and 354–357 (GGDT) each bind ATP.

Belongs to the phosphoglycerate kinase family. As to quaternary structure, monomer.

The protein resides in the cytoplasm. It carries out the reaction (2R)-3-phosphoglycerate + ATP = (2R)-3-phospho-glyceroyl phosphate + ADP. It participates in carbohydrate degradation; glycolysis; pyruvate from D-glyceraldehyde 3-phosphate: step 2/5. The chain is Phosphoglycerate kinase from Sinorhizobium medicae (strain WSM419) (Ensifer medicae).